We begin with the raw amino-acid sequence, 432 residues long: E3 ubiquitin-protein ligase ATL42 (432 aa).

Residues 1-18 (MYQIFFFFLPLLHSYASA) form the signal peptide. The helical transmembrane segment at 37–57 (LAVVTGVLAIMFALTFVLLVY) threads the bilayer. The segment at 123–165 (CSVCLSKFESVEILRLLPKCRHAFHIGCIDQWLEQHATCPLCR) adopts an RING-type; atypical zinc-finger fold.

This sequence belongs to the RING-type zinc finger family. ATL subfamily.

It is found in the membrane. The enzyme catalyses S-ubiquitinyl-[E2 ubiquitin-conjugating enzyme]-L-cysteine + [acceptor protein]-L-lysine = [E2 ubiquitin-conjugating enzyme]-L-cysteine + N(6)-ubiquitinyl-[acceptor protein]-L-lysine.. It functions in the pathway protein modification; protein ubiquitination. Its function is as follows. E3 ubiquitin-protein ligase able to catalyze polyubiquitination with ubiquitin-conjugating enzyme E2 UBC8 in vitro. The polypeptide is E3 ubiquitin-protein ligase ATL42 (ATL42) (Arabidopsis thaliana (Mouse-ear cress)).